Consider the following 4249-residue polypeptide: Fibrocystin-L (4249 aa).

Residues M1–A20 form the signal peptide. Residues D21 to T4222 lie on the Extracellular side of the membrane. IPT/TIG domains follow at residues P31 to S132, P146 to Y255, P270 to Y361, P1067 to Y1153, S1155 to Y1234, P1240 to A1323, L1329 to Y1468, P1565 to K1648, P1658 to Y1742, P1748 to I1827, P1830 to Y1909, P1915 to Y1996, L1998 to Y2084, and P2090 to Y2175. The 156-residue stretch at P337–D492 folds into the PA14 domain. O-linked (GalNAc...) threonine glycans are attached at residues T1297 and T1359. A glycan (O-linked (GalNAc...) threonine) is linked at T1838. In terms of domain architecture, G8 1 spans S2183–H2303. PbH1 repeat units follow at residues Q2484 to N2506, T2507 to D2529, N2565 to M2587, G2664 to R2686, and S2732 to V2755. The G8 2 domain maps to S3035–E3173. PbH1 repeat units lie at residues K3292–T3314, T3354–G3376, G3415–G3437, P3470–T3492, and T3493–V3514. An O-linked (GalNAc...) threonine glycan is attached at T3735. The interval L4183–A4208 is disordered. Low complexity predominate over residues G4197 to A4208. The helical transmembrane segment at A4223 to N4243 threads the bilayer. At T4244 to N4249 the chain is on the cytoplasmic side.

As to expression, expressed in neurons in the hippocampus and the cerebral cortex (at protein level). Transiently expressed at high levels in inner ear hair cells, predominantly in outer hair cells, during early postnatal development (at protein level).

Its subcellular location is the membrane. The protein resides in the cell projection. It is found in the stereocilium membrane. Component of hair-cell stereocilia coat. Required for normal hearing. The chain is Fibrocystin-L (Pkhd1l1) from Mus musculus (Mouse).